Reading from the N-terminus, the 175-residue chain is Adenine phosphoribosyltransferase (175 aa).

This sequence belongs to the purine/pyrimidine phosphoribosyltransferase family. Homodimer.

It is found in the cytoplasm. It carries out the reaction AMP + diphosphate = 5-phospho-alpha-D-ribose 1-diphosphate + adenine. The protein operates within purine metabolism; AMP biosynthesis via salvage pathway; AMP from adenine: step 1/1. Its function is as follows. Catalyzes a salvage reaction resulting in the formation of AMP, that is energically less costly than de novo synthesis. The protein is Adenine phosphoribosyltransferase of Synechococcus sp. (strain JA-2-3B'a(2-13)) (Cyanobacteria bacterium Yellowstone B-Prime).